The primary structure comprises 194 residues: Probable GTP-binding protein EngB (194 aa).

Residues 23-194 form the EngB-type G domain; it reads DKMEFAFVGR…LNFMEEKLNN (172 aa). GTP contacts are provided by residues 31 to 38, 58 to 62, 76 to 79, 142 to 145, and 173 to 175; these read GRSNVGKS, GRTQL, DLPG, TKID, and HSS. Mg(2+)-binding residues include Ser38 and Thr60.

Belongs to the TRAFAC class TrmE-Era-EngA-EngB-Septin-like GTPase superfamily. EngB GTPase family. The cofactor is Mg(2+).

Its function is as follows. Necessary for normal cell division and for the maintenance of normal septation. The protein is Probable GTP-binding protein EngB of Fusobacterium nucleatum subsp. nucleatum (strain ATCC 25586 / DSM 15643 / BCRC 10681 / CIP 101130 / JCM 8532 / KCTC 2640 / LMG 13131 / VPI 4355).